Here is a 199-residue protein sequence, read N- to C-terminus: V-type proton ATPase subunit E (199 aa).

The protein belongs to the V-ATPase E subunit family.

Produces ATP from ADP in the presence of a proton gradient across the membrane. The chain is V-type proton ATPase subunit E from Clostridium botulinum (strain Loch Maree / Type A3).